The primary structure comprises 365 residues: Putative outer membrane porin protein NmpC (365 aa).

The signal sequence occupies residues Met-1–Ala-23.

It belongs to the Gram-negative porin family. In terms of assembly, homotrimer.

The protein localises to the cell outer membrane. In Escherichia coli (strain K12), this protein is Putative outer membrane porin protein NmpC (nmpC).